Here is a 388-residue protein sequence, read N- to C-terminus: Chorismate synthase (388 aa).

NADP(+) contacts are provided by Arg39 and Arg45. Residues 130 to 132 (RSS), 251 to 252 (NA), Gly296, 311 to 315 (KPIPT), and Arg337 contribute to the FMN site.

It belongs to the chorismate synthase family. In terms of assembly, homotetramer. It depends on FMNH2 as a cofactor.

It carries out the reaction 5-O-(1-carboxyvinyl)-3-phosphoshikimate = chorismate + phosphate. The protein operates within metabolic intermediate biosynthesis; chorismate biosynthesis; chorismate from D-erythrose 4-phosphate and phosphoenolpyruvate: step 7/7. In terms of biological role, catalyzes the anti-1,4-elimination of the C-3 phosphate and the C-6 proR hydrogen from 5-enolpyruvylshikimate-3-phosphate (EPSP) to yield chorismate, which is the branch point compound that serves as the starting substrate for the three terminal pathways of aromatic amino acid biosynthesis. This reaction introduces a second double bond into the aromatic ring system. This chain is Chorismate synthase, found in Streptococcus pneumoniae serotype 19F (strain G54).